We begin with the raw amino-acid sequence, 419 residues long: 26S proteasome regulatory subunit 8 homolog B (419 aa).

Residue 202–209 (GPPGTGKT) participates in ATP binding. Lys-406 participates in a covalent cross-link: Glycyl lysine isopeptide (Lys-Gly) (interchain with G-Cter in ubiquitin).

It belongs to the AAA ATPase family. In terms of assembly, component of the 19S regulatory particle (RP/PA700) base subcomplex of the 26S proteasome. The 26S proteasome is composed of a core protease (CP), known as the 20S proteasome, capped at one or both ends by the 19S regulatory particle (RP/PA700). The RP/PA700 complex is composed of at least 17 different subunits in two subcomplexes, the base and the lid, which form the portions proximal and distal to the 20S proteolytic core, respectively.

The protein resides in the cytoplasm. The protein localises to the nucleus. In terms of biological role, the 26S proteasome is involved in the ATP-dependent degradation of ubiquitinated proteins. The regulatory (or ATPase) complex confers ATP dependency and substrate specificity to the 26S complex. The polypeptide is 26S proteasome regulatory subunit 8 homolog B (RPT6B) (Arabidopsis thaliana (Mouse-ear cress)).